Here is a 123-residue protein sequence, read N- to C-terminus: MFFFNTKPIVFLVVLSVVATFAAATPAMLARGGGSSCAPSTSLKCCDHVGTFSEVSPYINPLELVGVIAALLGLVGGLFTSVTLALTCSGIDIGGSCNSQTVCCENVVFNGLVNVGCTAIDIL.

The signal sequence occupies residues Met1 to Ala24. 4 disulfides stabilise this stretch: Cys37–Cys103, Cys45–Cys97, Cys46–Cys88, and Cys104–Cys117.

This sequence belongs to the fungal hydrophobin family. In terms of assembly, self-assembles to form functional amyloid fibrils called rodlets. Self-assembly into fibrillar rodlets occurs spontaneously at hydrophobic:hydrophilic interfaces and the rodlets further associate laterally to form amphipathic monolayers.

The protein localises to the secreted. It localises to the cell wall. Functionally, aerial growth, conidiation, and dispersal of filamentous fungi in the environment rely upon a capability of their secreting small amphipathic proteins called hydrophobins (HPBs) with low sequence identity. Class I can self-assemble into an outermost layer of rodlet bundles on aerial cell surfaces, conferring cellular hydrophobicity that supports fungal growth, development and dispersal; whereas Class II form highly ordered films at water-air interfaces through intermolecular interactions but contribute nothing to the rodlet structure. In Pleurotus ostreatus (strain PC15) (Oyster mushroom), this protein is Unclassified hydrophobin 9.